We begin with the raw amino-acid sequence, 1706 residues long: Probable ATP-dependent RNA helicase DDX60-like (1706 aa).

The disordered stretch occupies residues 545–580 (RPKEDSSGASGEILQNTKPHQITKKSKKKSFLKEDQ). The span at 551–564 (SGASGEILQNTKPH) shows a compositional bias: polar residues. Residues 565-574 (QITKKSKKKS) show a composition bias toward basic residues. Residues 752–919 (LDVVDKNESA…WLQSVKQYWK (168 aa)) enclose the Helicase ATP-binding domain. ATP is bound at residue 765–772 (APTSSGKT). The DEAH box motif lies at 869–872 (DEVH). Positions 1205 to 1354 (DVKALHTEIT…QFPLSITLVL (150 aa)) constitute a Helicase C-terminal domain.

Belongs to the helicase family.

The catalysed reaction is ATP + H2O = ADP + phosphate + H(+). This chain is Probable ATP-dependent RNA helicase DDX60-like, found in Homo sapiens (Human).